We begin with the raw amino-acid sequence, 156 residues long: Endoribonuclease YbeY (156 aa).

Positions 122, 126, and 132 each coordinate Zn(2+).

This sequence belongs to the endoribonuclease YbeY family. Zn(2+) serves as cofactor.

Its subcellular location is the cytoplasm. Single strand-specific metallo-endoribonuclease involved in late-stage 70S ribosome quality control and in maturation of the 3' terminus of the 16S rRNA. In Geobacillus thermodenitrificans (strain NG80-2), this protein is Endoribonuclease YbeY.